We begin with the raw amino-acid sequence, 101 residues long: Large ribosomal subunit protein uL23 (101 aa).

It belongs to the universal ribosomal protein uL23 family. As to quaternary structure, part of the 50S ribosomal subunit. Contacts protein L29, and trigger factor when it is bound to the ribosome.

In terms of biological role, one of the early assembly proteins it binds 23S rRNA. One of the proteins that surrounds the polypeptide exit tunnel on the outside of the ribosome. Forms the main docking site for trigger factor binding to the ribosome. The sequence is that of Large ribosomal subunit protein uL23 from Thiobacillus denitrificans (strain ATCC 25259 / T1).